Reading from the N-terminus, the 259-residue chain is Phosphatidylserine decarboxylase proenzyme (259 aa).

Serine 183 acts as the Schiff-base intermediate with substrate; via pyruvic acid in catalysis. Serine 183 carries the pyruvic acid (Ser); by autocatalysis modification.

It belongs to the phosphatidylserine decarboxylase family. PSD-A subfamily. As to quaternary structure, heterodimer of a large membrane-associated beta subunit and a small pyruvoyl-containing alpha subunit. It depends on pyruvate as a cofactor. Post-translationally, is synthesized initially as an inactive proenzyme. Formation of the active enzyme involves a self-maturation process in which the active site pyruvoyl group is generated from an internal serine residue via an autocatalytic post-translational modification. Two non-identical subunits are generated from the proenzyme in this reaction, and the pyruvate is formed at the N-terminus of the alpha chain, which is derived from the carboxyl end of the proenzyme. The post-translation cleavage follows an unusual pathway, termed non-hydrolytic serinolysis, in which the side chain hydroxyl group of the serine supplies its oxygen atom to form the C-terminus of the beta chain, while the remainder of the serine residue undergoes an oxidative deamination to produce ammonia and the pyruvoyl prosthetic group on the alpha chain.

The protein localises to the cell membrane. The catalysed reaction is a 1,2-diacyl-sn-glycero-3-phospho-L-serine + H(+) = a 1,2-diacyl-sn-glycero-3-phosphoethanolamine + CO2. The protein operates within phospholipid metabolism; phosphatidylethanolamine biosynthesis; phosphatidylethanolamine from CDP-diacylglycerol: step 2/2. Functionally, catalyzes the formation of phosphatidylethanolamine (PtdEtn) from phosphatidylserine (PtdSer). This chain is Phosphatidylserine decarboxylase proenzyme, found in Neisseria gonorrhoeae (strain NCCP11945).